The following is a 142-amino-acid chain: Histone H2B (142 aa).

A compositionally biased stretch (basic and acidic residues) spans 1 to 10; sequence MPPKPAEKKP. Positions 1 to 50 are disordered; sequence MPPKPAEKKPSSTAGKAPASSAGKAPAEAAKKTSKAPAKSGEKKKATKVR. An N6-acetyllysine; alternate mark is found at Lys-8 and Lys-9. Glycyl lysine isopeptide (Lys-Gly) (interchain with G-Cter in SUMO); alternate cross-links involve residues Lys-8 and Lys-9. Residues 11–28 show a composition bias toward low complexity; that stretch reads SSTAGKAPASSAGKAPAE. At Lys-24 the chain carries N6-acetyllysine. The segment covering 40–50 has biased composition (basic and acidic residues); the sequence is SGEKKKATKVR. Lys-137 is covalently cross-linked (Glycyl lysine isopeptide (Lys-Gly) (interchain with G-Cter in ubiquitin)).

This sequence belongs to the histone H2B family. The nucleosome is a histone octamer containing two molecules each of H2A, H2B, H3 and H4 assembled in one H3-H4 heterotetramer and two H2A-H2B heterodimers. The octamer wraps approximately 147 bp of DNA. Post-translationally, monoubiquitinated by the UBC2-BRE1 complex to form H2BK123ub1. H2BK123ub1 gives a specific tag for epigenetic transcriptional activation and is also prerequisite for H3K4me and H3K79me formation. H2BK123ub1 also modulates the formation of double-strand breaks during meiosis and is a prerequisite for DNA-damage checkpoint activation. In terms of processing, acetylation of N-terminal lysines and particularly formation of H2BK11ac has a positive effect on transcription. Sumoylation to form H2BK6su or H2BK7su occurs preferentially near the telomeres and represses gene transcription.

The protein resides in the nucleus. The protein localises to the chromosome. Its function is as follows. Core component of nucleosome. Nucleosomes wrap and compact DNA into chromatin, limiting DNA accessibility to the cellular machineries which require DNA as a template. Histones thereby play a central role in transcription regulation, DNA repair, DNA replication and chromosomal stability. DNA accessibility is regulated via a complex set of post-translational modifications of histones, also called histone code, and nucleosome remodeling. This is Histone H2B (HTB1) from Mycosarcoma maydis (Corn smut fungus).